A 205-amino-acid polypeptide reads, in one-letter code: Lipoprotein MlpB (205 aa).

The first 17 residues, 1–17 (MKIINILFCLLLIVLNS), serve as a signal peptide directing secretion. A lipid anchor (N-palmitoyl cysteine) is attached at Cys-18. Residue Cys-18 is the site of S-diacylglycerol cysteine attachment.

This sequence belongs to the Multicopy lipoprotein (Mlp) family.

It localises to the cell outer membrane. Functionally, an outer membrane protein that may participate in pathogenesis. Some human Lyme disease patients have antibodies against this protein. The Mlp proteins probably undergo intragenic recombination, generating new alleles. This chain is Lipoprotein MlpB, found in Borreliella burgdorferi (strain ATCC 35210 / DSM 4680 / CIP 102532 / B31) (Borrelia burgdorferi).